The chain runs to 99 residues: U1-theraphotoxin-Lsp1c (99 aa).

Residues 1 to 23 (MRKITIRALLLCSLLLVFHTSAA) form the signal peptide. Positions 24 to 50 (AELQAQEGHLMIPGDTDTALETVDDER) are excised as a propeptide. Disulfide bonds link Cys-54/Cys-67, Cys-58/Cys-91, Cys-72/Cys-74, and Cys-85/Cys-96.

Belongs to the neurotoxin 12 (Hwtx-2) family. 04 (lasiotoxin) subfamily. As to expression, expressed by the venom gland.

It localises to the secreted. Toxin that causes irreversible contractile paralysis into adult Aedes aegypti resulting in 100% mortality after 24 hours. The sequence is that of U1-theraphotoxin-Lsp1c from Lasiodora sp. (strain IBSP 8539) (Brazilian salmon pink birdeater).